A 721-amino-acid chain; its full sequence is mRNA (2'-O-methyladenosine-N(6)-)-methyltransferase (721 aa).

2 stretches are compositionally biased toward polar residues: residues 1-10 (MTSENHTTIK) and 19-36 (PTGS…TSKP). The segment at 1–37 (MTSENHTTIKADSALVMSPTGSTSQAAPFSPSTSKPI) is disordered. A WW domain is found at 43 to 77 (ELIQAGWSKCWSKRENRPYYFNRFTNQSLWEMPVL). Residues 93–170 (PASGEANADA…KQGQASTPAP (78 aa)) are disordered. Positions 132–148 (IPATPTTPTVPISPSTP) are enriched in low complexity. The substrate site is built by Arg-239 and Arg-269. Position 558 to 561 (558 to 561 (NPPF)) interacts with S-adenosyl-L-methionine. Residues Glu-563 and 593–597 (WRDPP) contribute to the substrate site. Residue 619–621 (FEH) participates in S-adenosyl-L-methionine binding. Over residues 675-686 (SGRSLPSPGPSS) the composition is skewed to low complexity. Residues 675 to 721 (SGRSLPSPGPSSTNTGEKDSKPAPERTAPSQDNSSPVDKTAQDTTNT) form a disordered region. Positions 702–721 (APSQDNSSPVDKTAQDTTNT) are enriched in polar residues.

Belongs to the CAPAM family.

It localises to the nucleus. It carries out the reaction a 5'-end (N(7)-methyl 5'-triphosphoguanosine)-(2'-O-methyladenosine) in mRNA + S-adenosyl-L-methionine = a 5'-end (N(7)-methyl 5'-triphosphoguanosine)-(N(6),2'-O-dimethyladenosine) in mRNA + S-adenosyl-L-homocysteine + H(+). Its activity is regulated as follows. Cap-specific adenosine methyltransferase activity is inhibited by zinc. Functionally, cap-specific adenosine methyltransferase that catalyzes formation of N(6),2'-O-dimethyladenosine cap (m6A(m)) by methylating the adenosine at the second transcribed position of capped mRNAs. This is mRNA (2'-O-methyladenosine-N(6)-)-methyltransferase (pcif1) from Danio rerio (Zebrafish).